The sequence spans 792 residues: Phenylalanine--tRNA ligase beta subunit (792 aa).

In terms of domain architecture, tRNA-binding spans 39 to 147 (GESLGQVVVA…DDAPVGQALA (109 aa)). The B5 domain occupies 400–475 (PQPARILLRR…RIHGYDRVPT (76 aa)). Mg(2+)-binding residues include Asp453, Asp459, Glu462, and Asp463. The region spanning 698–791 (SRFPSVRRDL…IEREHRARIR (94 aa)) is the FDX-ACB domain.

It belongs to the phenylalanyl-tRNA synthetase beta subunit family. Type 1 subfamily. As to quaternary structure, tetramer of two alpha and two beta subunits. The cofactor is Mg(2+).

Its subcellular location is the cytoplasm. It catalyses the reaction tRNA(Phe) + L-phenylalanine + ATP = L-phenylalanyl-tRNA(Phe) + AMP + diphosphate + H(+). The chain is Phenylalanine--tRNA ligase beta subunit from Xanthomonas oryzae pv. oryzae (strain MAFF 311018).